The primary structure comprises 434 residues: Monodehydroascorbate reductase, seedling isozyme (434 aa).

FAD is bound by residues 13 to 16 (GGVA), glutamate 40, arginine 47, lysine 52, isoleucine 95, and 146 to 147 (RE). Residues 171–177 (GGYIGLE), glutamate 195, arginine 201, and glycine 260 contribute to the NAD(+) site. An NADP(+)-binding site is contributed by 173 to 177 (YIGLE). NADP(+) is bound by residues arginine 201 and glycine 260. An FAD-binding site is contributed by aspartate 297. 313 to 314 (EH) lines the NAD(+) pocket. 313–314 (EH) is a binding site for NADP(+). Position 315 (valine 315) interacts with FAD. Arginine 319 provides a ligand contact to L-ascorbate. Tyrosine 348 is a binding site for FAD. Tyrosine 348 provides a ligand contact to NAD(+). Tyrosine 348 contacts NADP(+). An L-ascorbate-binding site is contributed by arginine 350.

It belongs to the FAD-dependent oxidoreductase family. Requires FAD as cofactor.

Its subcellular location is the cytoplasm. It carries out the reaction 2 monodehydro-L-ascorbate radical + NADH + H(+) = 2 L-ascorbate + NAD(+). Its function is as follows. Catalyzes the conversion of monodehydroascorbate to ascorbate, oxidizing NADH in the process. The sequence is that of Monodehydroascorbate reductase, seedling isozyme from Cucumis sativus (Cucumber).